The sequence spans 267 residues: Nus factor SuhB (267 aa).

Residues E67, D84, and L86 each contribute to the Mg(2+) site. E67 provides a ligand contact to substrate. Substrate is bound by residues L86–T89, R183, and D212.

Belongs to the inositol monophosphatase superfamily. In terms of assembly, homodimer. The rRNA transcription and antitermination complex (rrnTAC) consists of RNA polymerase (RNAP), NusA, NusB, NusE (rpsJ), NusG, SubB, ribosomal protein S4, DNA and precursor rRNA; S4 is more flexible than other subunits. The cofactor is Mg(2+).

Its subcellular location is the cytoplasm. It carries out the reaction a myo-inositol phosphate + H2O = myo-inositol + phosphate. Part of the processive rRNA transcription and antitermination complex (rrnTAC). The complex forms an RNA-chaperone ring around the RNA exit tunnel of RNA polymerase (RNAP). It supports rapid transcription and antitermination of rRNA operons, cotranscriptional rRNA folding, and annealing of distal rRNA regions to allow correct ribosome biogenesis. This subunit may play a central role in organizing the structure. This Vibrio cholerae serotype O1 (strain ATCC 39315 / El Tor Inaba N16961) protein is Nus factor SuhB.